The following is a 234-amino-acid chain: Arsenate respiratory reductase iron-sulfur subunit ArrB (234 aa).

4Fe-4S ferredoxin-type domains are found at residues 3–32 (LGMV…NDGI), 48–79 (VKYT…KDKR), and 80–109 (GLTL…FNAA). Residues C12, C15, C18, C22, C57, C60, C65, C69, C89, C92, C95, C99, C164, C167, C179, and C183 each contribute to the [4Fe-4S] cluster site.

Heterodimer composed of one large subunit (ArrA) and one small subunit (ArrB). [4Fe-4S] cluster serves as cofactor.

The protein localises to the periplasm. With respect to regulation, phosphate is a competitive inhibitor. Its function is as follows. Component of the arsenate respiratory reductase (Arr) complex, which catalyzes the reduction of arsenate (As(V)) to arsenite (As(III)). ArrB is probably the electron transfer subunit. The periplasmic localization of this complex may allow the cell to couple arsenate reduction to energy production before arsenate can be transported to the cell cytoplasm and enter the ars detoxification pathway, an energy-requiring process. In Shewanella sp. (strain ANA-3), this protein is Arsenate respiratory reductase iron-sulfur subunit ArrB.